The following is a 299-amino-acid chain: Bifunctional protein FolD (299 aa).

Residues 168–170, Ser193, and Ile234 each bind NADP(+); that span reads GRS.

It belongs to the tetrahydrofolate dehydrogenase/cyclohydrolase family. As to quaternary structure, homodimer.

It carries out the reaction (6R)-5,10-methylene-5,6,7,8-tetrahydrofolate + NADP(+) = (6R)-5,10-methenyltetrahydrofolate + NADPH. The enzyme catalyses (6R)-5,10-methenyltetrahydrofolate + H2O = (6R)-10-formyltetrahydrofolate + H(+). It participates in one-carbon metabolism; tetrahydrofolate interconversion. In terms of biological role, catalyzes the oxidation of 5,10-methylenetetrahydrofolate to 5,10-methenyltetrahydrofolate and then the hydrolysis of 5,10-methenyltetrahydrofolate to 10-formyltetrahydrofolate. The sequence is that of Bifunctional protein FolD from Bartonella tribocorum (strain CIP 105476 / IBS 506).